We begin with the raw amino-acid sequence, 311 residues long: Metal-staphylopine import system permease protein CntB (311 aa).

Transmembrane regions (helical) follow at residues 9-29 (IALM…LTYI), 105-125 (LTII…VVSA), 139-159 (VAFF…IIYV), 173-193 (GPES…GIYF), 237-257 (IFCM…YIFA), and 274-294 (FPVI…FNTL). Residues 99–295 (FMNTLKLTII…VLFIVFNTLA (197 aa)) enclose the ABC transmembrane type-1 domain.

This sequence belongs to the binding-protein-dependent transport system permease family. In terms of assembly, the complex is composed of two ATP-binding proteins (CntD and CntF), two transmembrane proteins (CntB and CntC) and a solute-binding protein (CntA).

The protein resides in the cell membrane. With respect to regulation, nickel/cobalt import is reduced in the presence of zinc. Its function is as follows. Part of the ABC transporter complex CntABCDF (Opp1) involved in the uptake of metal in complex with the metallophore staphylopine (StP). Involved in the import of divalent metals ions such as nickel, cobalt and zinc. Probably responsible for the translocation of the substrate across the membrane. Plays a major role in nickel/cobalt import in zinc-depleted conditions. Contributes to virulence. Required for full urease activity in vitro. This is Metal-staphylopine import system permease protein CntB from Staphylococcus aureus (strain NCTC 8325 / PS 47).